The primary structure comprises 444 residues: MTHSVPNIGFVSLGCPKNLVDSERILTELRSDGYNIIPTYENADLVIVNTCGFIDSAVQESLEAIGEALEANGKVLVTGCLGAKEDRIREVHPKVLEITGPHSYEAVMEHVHKYVPKPAYNPYINVVPSQGVKLTPKHYAYLKISEGCDHKCTFCIIPSLRGDLDSRPITQILDEAKRLADSGVKELLVVSQDTSAYSLDQSKETQNKTVFWNGIPIKNNLITLCQMLGTLGVWVRLHYVYPYPHVDDLIPLMAAGKILPYLDIPLQHASPKILKAMKRPGSVERVLERIKNWREICPELTLRSTFIVGFPGETEEDFQLLLDFLKEAQLDRVGCFKFSPVDGATATDMPDQVPEEVKEERFQRFMQLQQEISAARLQQKIGKTWKVIVDEIDEEGIIGRSMADAPEIDGVVYVDNVGQSAVRIGDIIDVRITRADEYDLWGTC.

One can recognise an MTTase N-terminal domain in the interval 6–116 (PNIGFVSLGC…VMEHVHKYVP (111 aa)). The [4Fe-4S] cluster site is built by C15, C51, C80, C148, C152, and C155. The 242-residue stretch at 134–375 (LTPKHYAYLK…MQLQQEISAA (242 aa)) folds into the Radical SAM core domain. Residues 378 to 444 (QQKIGKTWKV…ADEYDLWGTC (67 aa)) form the TRAM domain.

The protein belongs to the methylthiotransferase family. RimO subfamily. Requires [4Fe-4S] cluster as cofactor.

The protein localises to the cytoplasm. The enzyme catalyses L-aspartate(89)-[ribosomal protein uS12]-hydrogen + (sulfur carrier)-SH + AH2 + 2 S-adenosyl-L-methionine = 3-methylsulfanyl-L-aspartate(89)-[ribosomal protein uS12]-hydrogen + (sulfur carrier)-H + 5'-deoxyadenosine + L-methionine + A + S-adenosyl-L-homocysteine + 2 H(+). Its function is as follows. Catalyzes the methylthiolation of an aspartic acid residue of ribosomal protein uS12. This is Ribosomal protein uS12 methylthiotransferase RimO from Actinobacillus succinogenes (strain ATCC 55618 / DSM 22257 / CCUG 43843 / 130Z).